The chain runs to 85 residues: Defensin-like protein 112 (85 aa).

A signal peptide spans 1-24; that stretch reads MAISKKMLTTFVLTILLAVSFVHC. 4 disulfides stabilise this stretch: C40–C80, C46–C71, C56–C78, and C60–C79.

Belongs to the DEFL family.

It localises to the secreted. This is Defensin-like protein 112 from Arabidopsis thaliana (Mouse-ear cress).